Reading from the N-terminus, the 301-residue chain is Troponin T, cardiac muscle (301 aa).

Acidic residues-rich tracts occupy residues 1-42 and 50-74; these read MSDL…EEEA and AETE…DGPV. Disordered regions lie at residues 1–99 and 125–223; these read MSDL…GERV and ENRK…KKKK. Residue Ser2 is modified to N-acetylserine. Ser2 carries the post-translational modification Phosphoserine; by CK2. Positions 82 to 93 are enriched in pro residues; that stretch reads RPFMPNLVPPKI. Composition is skewed to basic and acidic residues over residues 125 to 186 and 206 to 223; these read ENRK…DEAR and QTER…KKKK. The residue at position 207 (Thr207) is a Phosphothreonine; by PKC/PRKCA. Ser211 is modified (phosphoserine; by PKC/PRKCA). The residue at position 216 (Thr216) is a Phosphothreonine; by PKC/PRKCA and RAF1. Residue Thr297 is modified to Phosphothreonine; by PKC/PRKCA.

Belongs to the troponin T family. As to quaternary structure, binds with troponins I and C to make the thin-filament regulatory complex, troponin. In terms of processing, phosphorylation at Thr-216 by PRKCA induces significant reduction in myofilament calcium sensitivity and actomyosin ATPase activity. The major isoform in adult heart is CTNT4.

In terms of biological role, troponin T is the tropomyosin-binding subunit of troponin, the thin filament regulatory complex which confers calcium-sensitivity to striated muscle actomyosin ATPase activity. The sequence is that of Troponin T, cardiac muscle (TNNT2) from Oryctolagus cuniculus (Rabbit).